The following is a 240-amino-acid chain: UDP-2,3-diacylglucosamine hydrolase (240 aa).

Asp-8, His-10, Asp-41, Asn-79, and His-114 together coordinate Mn(2+). 79–80 (NR) serves as a coordination point for substrate. Residues Asp-122, Ser-160, Asn-164, Lys-167, and His-195 each contribute to the substrate site. The Mn(2+) site is built by His-195 and His-197.

Belongs to the LpxH family. Mn(2+) serves as cofactor.

It is found in the cell inner membrane. It catalyses the reaction UDP-2-N,3-O-bis[(3R)-3-hydroxytetradecanoyl]-alpha-D-glucosamine + H2O = 2-N,3-O-bis[(3R)-3-hydroxytetradecanoyl]-alpha-D-glucosaminyl 1-phosphate + UMP + 2 H(+). The protein operates within glycolipid biosynthesis; lipid IV(A) biosynthesis; lipid IV(A) from (3R)-3-hydroxytetradecanoyl-[acyl-carrier-protein] and UDP-N-acetyl-alpha-D-glucosamine: step 4/6. Functionally, hydrolyzes the pyrophosphate bond of UDP-2,3-diacylglucosamine to yield 2,3-diacylglucosamine 1-phosphate (lipid X) and UMP by catalyzing the attack of water at the alpha-P atom. Involved in the biosynthesis of lipid A, a phosphorylated glycolipid that anchors the lipopolysaccharide to the outer membrane of the cell. The chain is UDP-2,3-diacylglucosamine hydrolase from Salmonella typhi.